Reading from the N-terminus, the 194-residue chain is Outer-membrane lipoprotein LolB (194 aa).

The signal sequence occupies residues 1–18 (MTLFLRIFTFGCLLLLAG). Cys-19 carries the N-palmitoyl cysteine lipid modification. Cys-19 carries S-diacylglycerol cysteine lipidation.

The protein belongs to the LolB family. As to quaternary structure, monomer.

It localises to the cell outer membrane. Plays a critical role in the incorporation of lipoproteins in the outer membrane after they are released by the LolA protein. This Aeromonas salmonicida (strain A449) protein is Outer-membrane lipoprotein LolB.